A 65-amino-acid polypeptide reads, in one-letter code: Metallothionein-B (65 aa).

It belongs to the metallothionein superfamily. Type 4 family.

In terms of biological role, metallothioneins have a high content of cysteine residues that bind various heavy metals. In Strongylocentrotus purpuratus (Purple sea urchin), this protein is Metallothionein-B (MTB1).